The sequence spans 502 residues: MKAAITGLVATVTTFLAYIVFLSYTPRVDKKSPQFTPNTVPLVGSWSFFTQKWAFWQDCVAKSQTGHFSFWLGKYHVVGVSGAAARKVFLDNPNFDFVRGATLVGHGPDFVPPLHAIFHGNFQNGRSYFQRRLVDLQKSEQLGKRLPGVTRDARGAFEALRQHASGVMNPTDACYRLVVQQACRVVCSDEIADDPAVLARTQSVLSLLMHTSSIHAVALPYLPSLAKLKRRWGRYGLSRIVTPIVQRRLQKKKDAPRHDDVVQYMLDRGDSPEWMVAFFISTLFIASANAGYLSGAMLNILAYHPDWQARIYREIKTVAAAHAPNPHAPLVDQLDTIPLDAWESFFPSIDLCFKEAIRMWVAFPMIRLNMAPHAVPIPGTDEVVPAGTFASYNSTEVHFNPELYPDPYRYDPERFREGREEFKKEVYGFVGWGQGRHPCLGMRWAKIQLNIILAYALAMYEWSGCDEKGQPSTHFDRKTDLNAPGPSLPVGLFCKYVPRKEV.

Residues 4–26 form a helical membrane-spanning segment; the sequence is AITGLVATVTTFLAYIVFLSYTP. A glycan (N-linked (GlcNAc...) asparagine) is linked at asparagine 393. Cysteine 439 provides a ligand contact to heme.

This sequence belongs to the cytochrome P450 family. Requires heme as cofactor.

The protein resides in the membrane. It functions in the pathway secondary metabolite biosynthesis. Its function is as follows. Cytochrome P450 monooxygenase; part of the gene cluster that mediates the biosynthesis of the tetrahydroxanthone dimer secalonic acid D. The pathway begins with the synthesis of atrochrysone thioester by the polyketide synthase AacuL. The atrochrysone carboxyl ACP thioesterase AacuM then breaks the thioester bond and releases the atrochrysone carboxylic acid from AacuL. Atrochrysone carboxylic acid is decarboxylated by the decarboxylase AacuI, and oxidized by the anthrone oxygenase AacuG to yield emodin. Emodin is then reduced to emodin hydroquinone by a yet unidentified oxidoreductase. A-ring reduction by the short chain dehydrogenase AacuN, dehydration by the scytalone dehydratase-like protein AacuK and probable spontaneous re-oxidation, results in overall deoxygenation to chrysophanol. Baeyer-Villiger oxidation by the Baeyer-Villiger monooxygenase (BVMO) AacuH then yields monodictyphenone. Monodictyphenone is transformed into compounds with the tetrahydroxanthone skeleton via methylesterification by the methyltransferase AacuQ, followed by the action of the flavin-dependent monooxygenase AacuC, the isomerase AacuP, and the short chain dehydrogenase/reductase AacuF or AacuD. AacuF and AacuD should accept the same compound as a substrate but perform the ketoreduction with a different stereoselectivity, thus yielding blennolides B and A, respectively. In the final step of the biosynthesis, the cytochrome P450 monooxygenase AacuE accepts blennolide B and/or blennolide A to conduct the dimerization reaction to furnish the tetrahydroxanthone dimers, secalonic acids D, B, and F. The sequence is that of Cytochrome P450 monooxygenase AacuE from Aspergillus aculeatus (strain ATCC 16872 / CBS 172.66 / WB 5094).